The sequence spans 735 residues: DNA replication licensing factor mcm5 (735 aa).

Positions 332-538 (IYETVAKSIA…RDMTLAKHVM (207 aa)) constitute an MCM domain. Residue arginine 372 coordinates ADP. An Arginine finger motif is present at residues 513-516 (SRFD).

This sequence belongs to the MCM family. Component of the mcm2-7 complex (RLF-M). The complex forms a toroidal hexameric ring with the proposed subunit order mcm2-mcm6-mcm4-mcm7-mcm3-mcm5. The heterodimer of mmcm3/mcm5 interacts with mcm4, mmcm6, mcm7 and weakly with mcm2. Component of the CMG helicase complex, composed of the mcm2-7 complex, the GINS complex and cdc45.

The protein localises to the nucleus. The protein resides in the chromosome. The catalysed reaction is ATP + H2O = ADP + phosphate + H(+). Its function is as follows. Acts as a component of the MCM2-7 complex (MCM complex) which is the replicative helicase essential for 'once per cell cycle' DNA replication initiation and elongation in eukaryotic cells. Core component of CDC45-MCM-GINS (CMG) helicase, the molecular machine that unwinds template DNA during replication, and around which the replisome is built. The active ATPase sites in the MCM2-7 ring are formed through the interaction surfaces of two neighboring subunits such that a critical structure of a conserved arginine finger motif is provided in trans relative to the ATP-binding site of the Walker A box of the adjacent subunit. The six ATPase active sites, however, are likely to contribute differentially to the complex helicase activity. In Xenopus tropicalis (Western clawed frog), this protein is DNA replication licensing factor mcm5.